Reading from the N-terminus, the 470-residue chain is MTDDVDTHIHEKFDLQKRLGKGAYGIVWKAYDKRSRETVALKKIFDAFRNPTDSQRTFREVMFLQEFGKHPNVIKLYNIFRADNDRDIYLAFEFMEADLHNVIKKGSILKDVHKQYIMCQLFRAIRFLHSGNVLHRDLKPSNVLLDADCRVKLADFGLARSLSSLEDYPEGQKMPDLTEYVATRWYRSPEILLAAKRYTKGVDMWSLGCILAEMLIGRALFPGSSTINQIERIMNTIAKPSRADIASIGSHYAASVLEKMPQRPRKPLDLIITQSQTAAIDMVQRLLIFAPQKRLTVEQCLVHPYVVQFHNPSEEPVLNYEVYPPLPDHIQLSIDDYRDRLYEMIDEKKASFKRIQHEKIRPYGEDKSRAPIAQAECSDTDYDTARSLQRTTSMDKNNSSSHDSSSGTLRERAASAESRTSKDSNGEMRNGNGNTPSSIKQRRRSVERARLFANIKPSKILHPHKLISNY.

One can recognise a Protein kinase domain in the interval 13-306 (FDLQKRLGKG…VEQCLVHPYV (294 aa)). ATP-binding positions include 19 to 27 (LGKGAYGIV) and K42. The active-site Proton acceptor is D137. T178 is modified (phosphothreonine). The TXY motif lies at 178-180 (TEY). Y180 is subject to Phosphotyrosine. Residues 362–445 (PYGEDKSRAP…PSSIKQRRRS (84 aa)) are disordered. Over residues 394–406 (MDKNNSSSHDSSS) the composition is skewed to low complexity. The span at 409 to 426 (LRERAASAESRTSKDSNG) shows a compositional bias: basic and acidic residues.

It belongs to the protein kinase superfamily. CMGC Ser/Thr protein kinase family. MAP kinase subfamily. Mg(2+) serves as cofactor. Post-translationally, dually phosphorylated on Thr-178 and Tyr-180, which activates the enzyme. In terms of tissue distribution, expressed in the URX neuron and in many other head sensory neurons. Isoform a: Expressed in head and tail ciliated sensory neurons, and in mid-body neurons. Isoform c: Expressed in head and tail ciliated sensory neurons, and in mid-body neurons.

It is found in the cell projection. The protein resides in the cilium. The protein localises to the cilium membrane. Its subcellular location is the cytoplasm. It localises to the cytoskeleton. It is found in the cilium axoneme. The protein resides in the cilium basal body. The protein localises to the cell junction. Its subcellular location is the perikaryon. It localises to the dendrite. It catalyses the reaction L-seryl-[protein] + ATP = O-phospho-L-seryl-[protein] + ADP + H(+). The catalysed reaction is L-threonyl-[protein] + ATP = O-phospho-L-threonyl-[protein] + ADP + H(+). Activated by threonine and tyrosine phosphorylation. Its function is as follows. Atypical MAPK protein. Regulates primary cilium formation in sensory neurons and the localization of ciliary proteins involved in cilium structure, transport, and signaling. Acts in dopamine (DA) neurons to support synaptic membrane dat-1 availability via activation of rho-1 thereby sustaining normal levels of DA clearance. Plays a role in male mating behavior, probably in part through regulating the localization of the polycystin pkd-2. Functions postembryonically in the URX sensory neurons to constrain URX dendrite growth throughout lifetime, probably by restricting expansion of the subcellular sensory compartment at the dendrite ending. The protein is Mitogen-activated protein kinase 15 of Caenorhabditis elegans.